The chain runs to 821 residues: Lon protease (821 aa).

The Lon N-terminal domain occupies 18–216 (LPLMSLREVV…KVYELLQGEI (199 aa)). 368 to 375 (GPPGVGKT) is a binding site for ATP. The 182-residue stretch at 606-787 (TSQVGVCTGL…DEVLPQALMA (182 aa)) folds into the Lon proteolytic domain. Catalysis depends on residues Ser-693 and Lys-736.

Belongs to the peptidase S16 family. As to quaternary structure, homohexamer. Organized in a ring with a central cavity.

It is found in the cytoplasm. It carries out the reaction Hydrolysis of proteins in presence of ATP.. Its function is as follows. ATP-dependent serine protease that mediates the selective degradation of mutant and abnormal proteins as well as certain short-lived regulatory proteins. Required for cellular homeostasis and for survival from DNA damage and developmental changes induced by stress. Degrades polypeptides processively to yield small peptide fragments that are 5 to 10 amino acids long. Binds to DNA in a double-stranded, site-specific manner. In Nitratidesulfovibrio vulgaris (strain ATCC 29579 / DSM 644 / CCUG 34227 / NCIMB 8303 / VKM B-1760 / Hildenborough) (Desulfovibrio vulgaris), this protein is Lon protease.